Reading from the N-terminus, the 806-residue chain is Dimethyl sulfoxide reductase DmsA (806 aa).

A signal peptide (tat-type signal) is located at residues 1–35 (MSNFNQISRRDFVKASSAGAALAVSNLTLPFNVMA). The region spanning 47–109 (ERIVWSACTV…SMRRRVYNPD (63 aa)) is the 4Fe-4S Mo/W bis-MGD-type domain. Residues C54, C58, C62, and C95 each coordinate [4Fe-4S] cluster. Mo-bis(molybdopterin guanine dinucleotide)-binding positions include 163–167 (LGGTM), S196, 236–237 (ET), 262–263 (ID), 283–285 (GTD), 378–379 (WG), R382, N480, 504–505 (ID), H693, 699–701 (HST), N780, and 796–797 (QH). Residues 786–806 (RPSPLAKGNPQHSNLVQVERL) form a disordered region. Over residues 795–806 (PQHSNLVQVERL) the composition is skewed to polar residues.

This sequence belongs to the prokaryotic molybdopterin-containing oxidoreductase family. As to quaternary structure, heterotrimeric enzyme composed of a catalytic heterodimer (DmsAB) and a membrane anchor protein (DmsC). It depends on [4Fe-4S] cluster as a cofactor. The cofactor is Mo-bis(molybdopterin guanine dinucleotide). In terms of processing, predicted to be exported by the Tat system. The position of the signal peptide cleavage has not been experimentally proven.

It is found in the cell membrane. It catalyses the reaction dimethyl sulfide + a menaquinone + H2O = dimethyl sulfoxide + a menaquinol. Functionally, catalyzes the reduction of dimethyl sulfoxide (DMSO) to dimethyl sulfide (DMS). The terminal DMSO reductase can also use various sulfoxides and N-oxide compounds as terminal electron acceptor in addition to DMSO. This Haemophilus influenzae (strain ATCC 51907 / DSM 11121 / KW20 / Rd) protein is Dimethyl sulfoxide reductase DmsA (dmsA).